The chain runs to 430 residues: MANVVVVGAQWGDEGKGKIVDWLSERADVIARFQGGHNAGHTLVIDGKVYKLSLLPSGIVRPGKLSVIGNGVVLDPWHLVGEIAKLRGEGVEITPDNLMIAENAVLILPLHGELDRARESHNAVAKIGTTGRGIGPAYEDKVGRRAIRVADLADEATLALRVDRLMVHHDALRRGLGIEPIDREALLAQLREIAPQVLPYAKPVWKVMNEMRKAGKRILFEGAQGALLDIDFGTYPFVTSSNVIAGQAATGTGIGPGAIGFVLGIVKAYTTRVGEGPFPAELKDADGERLGERGREFGTVTGRKRRCGWFDAVLVRQTCATSGVSGIALTKLDVLDGFETLKICVGYDLDGERLDHLPIAADQQARCTPIYEELEGWSESTAGARSWADLPGAAVKYVRRIEELIQCPVALLSTSPERDDTILVTDPFED.

GTP-binding positions include 12–18 (GDEGKGK) and 40–42 (GHT). The Proton acceptor role is filled by Asp-13. The Mg(2+) site is built by Asp-13 and Gly-40. IMP contacts are provided by residues 13–16 (DEGK), 38–41 (NAGH), Thr-130, Arg-144, Gln-224, Thr-239, and Arg-303. The active-site Proton donor is His-41. Substrate is bound at residue 299–305 (TVTGRKR). Residues Arg-305, 331–333 (KLD), and 413–415 (STS) each bind GTP.

The protein belongs to the adenylosuccinate synthetase family. Homodimer. Mg(2+) is required as a cofactor.

Its subcellular location is the cytoplasm. It carries out the reaction IMP + L-aspartate + GTP = N(6)-(1,2-dicarboxyethyl)-AMP + GDP + phosphate + 2 H(+). The protein operates within purine metabolism; AMP biosynthesis via de novo pathway; AMP from IMP: step 1/2. In terms of biological role, plays an important role in the de novo pathway of purine nucleotide biosynthesis. Catalyzes the first committed step in the biosynthesis of AMP from IMP. This is Adenylosuccinate synthetase from Cereibacter sphaeroides (strain ATCC 17025 / ATH 2.4.3) (Rhodobacter sphaeroides).